A 423-amino-acid polypeptide reads, in one-letter code: Serine--tRNA ligase (423 aa).

231 to 233 lines the L-serine pocket; sequence TGE. 262 to 264 lines the ATP pocket; sequence RSE. Glutamate 285 contacts L-serine. 349 to 352 provides a ligand contact to ATP; the sequence is EISS. Serine 385 serves as a coordination point for L-serine.

It belongs to the class-II aminoacyl-tRNA synthetase family. Type-1 seryl-tRNA synthetase subfamily. In terms of assembly, homodimer. The tRNA molecule binds across the dimer.

Its subcellular location is the cytoplasm. It carries out the reaction tRNA(Ser) + L-serine + ATP = L-seryl-tRNA(Ser) + AMP + diphosphate + H(+). The catalysed reaction is tRNA(Sec) + L-serine + ATP = L-seryl-tRNA(Sec) + AMP + diphosphate + H(+). The protein operates within aminoacyl-tRNA biosynthesis; selenocysteinyl-tRNA(Sec) biosynthesis; L-seryl-tRNA(Sec) from L-serine and tRNA(Sec): step 1/1. In terms of biological role, catalyzes the attachment of serine to tRNA(Ser). Is also able to aminoacylate tRNA(Sec) with serine, to form the misacylated tRNA L-seryl-tRNA(Sec), which will be further converted into selenocysteinyl-tRNA(Sec). In Coxiella burnetii (strain RSA 331 / Henzerling II), this protein is Serine--tRNA ligase.